A 491-amino-acid chain; its full sequence is Glutamyl-tRNA(Gln) amidotransferase subunit A (491 aa).

Catalysis depends on charge relay system residues Lys78 and Ser158. Ser182 serves as the catalytic Acyl-ester intermediate.

It belongs to the amidase family. GatA subfamily. As to quaternary structure, heterotrimer of A, B and C subunits.

The enzyme catalyses L-glutamyl-tRNA(Gln) + L-glutamine + ATP + H2O = L-glutaminyl-tRNA(Gln) + L-glutamate + ADP + phosphate + H(+). Allows the formation of correctly charged Gln-tRNA(Gln) through the transamidation of misacylated Glu-tRNA(Gln) in organisms which lack glutaminyl-tRNA synthetase. The reaction takes place in the presence of glutamine and ATP through an activated gamma-phospho-Glu-tRNA(Gln). The chain is Glutamyl-tRNA(Gln) amidotransferase subunit A from Nitrobacter winogradskyi (strain ATCC 25391 / DSM 10237 / CIP 104748 / NCIMB 11846 / Nb-255).